The sequence spans 271 residues: 5'-AMP-activated protein kinase subunit beta-2 (271 aa).

A disordered region spans residues 1-47 (MGNTTSERVSGERHGAKAARAEGGGHGPGKEHKIMVGSTDDPSVFSL). The residue at position 38 (serine 38) is a Phosphoserine; by ULK1. A Phosphothreonine; by ULK1 modification is found at threonine 39. A Phosphoserine; by ULK1 modification is found at serine 68. Phosphoserine is present on residues serine 94 and serine 107. The residue at position 147 (threonine 147) is a Phosphothreonine. 2 positions are modified to phosphoserine: serine 157 and serine 169. Serine 173 is modified (phosphoserine; by ULK1). Phosphoserine is present on serine 183.

This sequence belongs to the 5'-AMP-activated protein kinase beta subunit family. As to quaternary structure, AMPK is a heterotrimer of an alpha catalytic subunit (PRKAA1 or PRKAA2), a beta (PRKAB1 or PRKAB2) and a gamma non-catalytic subunits (PRKAG1, PRKAG2 or PRKAG3). In terms of processing, phosphorylated when associated with the catalytic subunit (PRKAA1 or PRKAA2). Phosphorylated by ULK1 and ULK2; leading to negatively regulate AMPK activity and suggesting the existence of a regulatory feedback loop between ULK1, ULK2 and AMPK.

Its function is as follows. Non-catalytic subunit of AMP-activated protein kinase (AMPK), an energy sensor protein kinase that plays a key role in regulating cellular energy metabolism. In response to reduction of intracellular ATP levels, AMPK activates energy-producing pathways and inhibits energy-consuming processes: inhibits protein, carbohydrate and lipid biosynthesis, as well as cell growth and proliferation. AMPK acts via direct phosphorylation of metabolic enzymes, and by longer-term effects via phosphorylation of transcription regulators. Also acts as a regulator of cellular polarity by remodeling the actin cytoskeleton; probably by indirectly activating myosin. Beta non-catalytic subunit acts as a scaffold on which the AMPK complex assembles, via its C-terminus that bridges alpha (PRKAA1 or PRKAA2) and gamma subunits (PRKAG1, PRKAG2 or PRKAG3). This Rattus norvegicus (Rat) protein is 5'-AMP-activated protein kinase subunit beta-2 (Prkab2).